A 597-amino-acid chain; its full sequence is mRNA-capping enzyme (597 aa).

The segment at 1–212 (MAYNKIPPRW…DEDGKKDSEP (212 aa)) is TPase. One can recognise a Tyrosine-protein phosphatase domain in the interval 25–183 (LPLKTMLGPR…FRRYGDIEEA (159 aa)). The active-site Phosphocysteine intermediate is the C126. A disordered region spans residues 181-221 (EEAPPPPVLPDWCFEDEDEEDEDEDGKKDSEPGSSASFSKR). Acidic residues predominate over residues 193–204 (CFEDEDEEDEDE). The segment at 229–597 (GAIFLEGITV…PPPKRLHRPT (369 aa)) is GTase. K294 acts as the N6-GMP-lysine intermediate in catalysis. GTP contacts are provided by residues R299, R315, 343 to 345 (DGE), 458 to 460 (KWK), and 528 to 533 (RQRIDK). The interaction with POLR2A stretch occupies residues 330–386 (RKDLRMHLSNTLLDGEMIIDKVNGQAVPRYLIYDIIKFNAQPVGDCDFNIRLQCIER). Residues 573–597 (KRKYPLDPDTELMPPPPPKRLHRPT) form a disordered region.

It in the N-terminal section; belongs to the non-receptor class of the protein-tyrosine phosphatase family. This sequence in the C-terminal section; belongs to the eukaryotic GTase family. In terms of assembly, interacts with SUPT5H and RNMT. Interacts with POLR2A (via C-terminus); this enhances guanylyltransferase activity. Binds (via GTase domain) to the elongating phosphorylated form of RNA polymerase II; can form direct interactions with the phosphorylated POLR2A C-terminal domain and indirect interactions via bound RNA.

The protein localises to the nucleus. It catalyses the reaction a 5'-end triphospho-ribonucleoside in mRNA + H2O = a 5'-end diphospho-ribonucleoside in mRNA + phosphate + H(+). The catalysed reaction is a 5'-end diphospho-ribonucleoside in mRNA + GTP + H(+) = a 5'-end (5'-triphosphoguanosine)-ribonucleoside in mRNA + diphosphate. RNA triphosphatase activity is inhibited by vanadate, iodoacetate and magnesium. Its function is as follows. Bifunctional mRNA-capping enzyme exhibiting RNA 5'-triphosphate monophosphatase activity in the N-terminal part and mRNA guanylyltransferase activity in the C-terminal part. Catalyzes the first two steps of cap formation: by removing the gamma-phosphate from the 5'-triphosphate end of nascent mRNA to yield a diphosphate end, and by transferring the GMP moiety of GTP to the 5'-diphosphate terminus of RNA via a covalent enzyme-GMP reaction intermediate. In Mus musculus (Mouse), this protein is mRNA-capping enzyme (Rngtt).